A 122-amino-acid polypeptide reads, in one-letter code: Large ribosomal subunit protein bL17 (122 aa).

Belongs to the bacterial ribosomal protein bL17 family. In terms of assembly, part of the 50S ribosomal subunit. Contacts protein L32.

The sequence is that of Large ribosomal subunit protein bL17 from Neisseria meningitidis serogroup C / serotype 2a (strain ATCC 700532 / DSM 15464 / FAM18).